The chain runs to 500 residues: FAD-linked oxidoreductase srdI (500 aa).

The N-terminal stretch at 1 to 20 is a signal peptide; it reads MHLSSSLLFTSALLAGGINA. N-linked (GlcNAc...) asparagine glycosylation is present at asparagine 47. Residues 69-241 enclose the FAD-binding PCMH-type domain; that stretch reads YRPPSYQAAI…TQATYKMHKS (173 aa). N-linked (GlcNAc...) asparagine glycans are attached at residues asparagine 257 and asparagine 282.

It belongs to the oxygen-dependent FAD-linked oxidoreductase family. FAD is required as a cofactor.

In terms of biological role, FAD-linked oxidoreductase; part of the gene cluster that mediates the biosynthesis of sordarial, a salicylic aldehyde structurally related to the phytotoxin pyriculol. The most interesting aspect of this pathway is formation of an aromatic product from the highly reducing polyketide synthase srdA. SrdA synthesizes a reduced polyketide chain from one molecule of acetyl-CoA and five molecules of malonyl-CoA. The polyketide chain is then reductively released as an aldehyde. The oxidoreductases srdC, srdD and srdE then oxidize one of the hydroxy groups to facilitate the intramolecular aldol condensation, followed by dehydration to yield a salicylic aldehyde. This aldehyde can undergo facile reduction by endogenous reductases to yield the alcohol 1-hydroxy-2-hydroxymethyl-3-pent-1,3-dienylbenzene. The flavin-dependent srdI counteract against the propensity of the aldehydes to be reduced under physiological conditions and is responsible for reoxidizing 1-hydroxy-2-hydroxymethyl-3-pent-1,3-dienylbenzene back to the salicylic aldehyde. This salicylic aldehyde is then selectively epoxidized by the cupin-domain-containing oxidoreductase srdB to yield the epoxide, which can be hydrolyzed stereoselectively by the hydrolase srdG to give the final product sordarial. In Neurospora crassa (strain ATCC 24698 / 74-OR23-1A / CBS 708.71 / DSM 1257 / FGSC 987), this protein is FAD-linked oxidoreductase srdI.